Reading from the N-terminus, the 266-residue chain is Glucosamine-6-phosphate deaminase (266 aa).

The Proton acceptor; for enolization step role is filled by Asp72. Catalysis depends on Asp141, which acts as the For ring-opening step. The Proton acceptor; for ring-opening step role is filled by His143. Residue Glu148 is the For ring-opening step of the active site.

The protein belongs to the glucosamine/galactosamine-6-phosphate isomerase family. NagB subfamily. In terms of assembly, homohexamer.

It carries out the reaction alpha-D-glucosamine 6-phosphate + H2O = beta-D-fructose 6-phosphate + NH4(+). It functions in the pathway amino-sugar metabolism; N-acetylneuraminate degradation; D-fructose 6-phosphate from N-acetylneuraminate: step 5/5. Allosterically activated by N-acetylglucosamine 6-phosphate (GlcNAc6P). In terms of biological role, catalyzes the reversible isomerization-deamination of glucosamine 6-phosphate (GlcN6P) to form fructose 6-phosphate (Fru6P) and ammonium ion. This chain is Glucosamine-6-phosphate deaminase, found in Erwinia tasmaniensis (strain DSM 17950 / CFBP 7177 / CIP 109463 / NCPPB 4357 / Et1/99).